Consider the following 446-residue polypeptide: Exodeoxyribonuclease 7 large subunit (446 aa).

This sequence belongs to the XseA family. Heterooligomer composed of large and small subunits.

It localises to the cytoplasm. It catalyses the reaction Exonucleolytic cleavage in either 5'- to 3'- or 3'- to 5'-direction to yield nucleoside 5'-phosphates.. Bidirectionally degrades single-stranded DNA into large acid-insoluble oligonucleotides, which are then degraded further into small acid-soluble oligonucleotides. This Shewanella denitrificans (strain OS217 / ATCC BAA-1090 / DSM 15013) protein is Exodeoxyribonuclease 7 large subunit.